The primary structure comprises 106 residues: ATP-dependent Clp protease adapter protein ClpS (106 aa).

It belongs to the ClpS family. As to quaternary structure, binds to the N-terminal domain of the chaperone ClpA.

Involved in the modulation of the specificity of the ClpAP-mediated ATP-dependent protein degradation. This chain is ATP-dependent Clp protease adapter protein ClpS, found in Enterobacter sp. (strain 638).